The primary structure comprises 208 residues: Large ribosomal subunit protein bL25 (208 aa).

Residues 163-208 (DYSYNHEPDEVVASILPPQKQEETEAESAAQDVEEPEKGTEEEKEE) form a disordered region. The span at 198–208 (PEKGTEEEKEE) shows a compositional bias: basic and acidic residues.

The protein belongs to the bacterial ribosomal protein bL25 family. CTC subfamily. Part of the 50S ribosomal subunit; part of the 5S rRNA/L5/L18/L25 subcomplex. Contacts the 5S rRNA. Binds to the 5S rRNA independently of L5 and L18.

Functionally, this is one of the proteins that binds to the 5S RNA in the ribosome where it forms part of the central protuberance. The chain is Large ribosomal subunit protein bL25 from Bacillus licheniformis (strain ATCC 14580 / DSM 13 / JCM 2505 / CCUG 7422 / NBRC 12200 / NCIMB 9375 / NCTC 10341 / NRRL NRS-1264 / Gibson 46).